The chain runs to 379 residues: Cytochrome b (379 aa).

The next 4 helical transmembrane spans lie at 33–53 (FGSL…FLAM), 77–98 (WMIR…FMHV), 113–133 (WNIG…GYVL), and 178–198 (FFAF…VHLL). 2 residues coordinate heme b: H83 and H97. Heme b is bound by residues H182 and H196. A ubiquinone is bound at residue H201. Transmembrane regions (helical) follow at residues 226 to 246 (IKDI…VLFS), 288 to 308 (LGGV…PMLH), 320 to 340 (LSQC…WIGG), and 347 to 367 (FITI…XLMP).

The protein belongs to the cytochrome b family. In terms of assembly, the cytochrome bc1 complex contains 11 subunits: 3 respiratory subunits (MT-CYB, CYC1 and UQCRFS1), 2 core proteins (UQCRC1 and UQCRC2) and 6 low-molecular weight proteins (UQCRH/QCR6, UQCRB/QCR7, UQCRQ/QCR8, UQCR10/QCR9, UQCR11/QCR10 and a cleavage product of UQCRFS1). This cytochrome bc1 complex then forms a dimer. The cofactor is heme b.

It localises to the mitochondrion inner membrane. Component of the ubiquinol-cytochrome c reductase complex (complex III or cytochrome b-c1 complex) that is part of the mitochondrial respiratory chain. The b-c1 complex mediates electron transfer from ubiquinol to cytochrome c. Contributes to the generation of a proton gradient across the mitochondrial membrane that is then used for ATP synthesis. This is Cytochrome b (MT-CYB) from Chrotogale owstoni (Owston's palm civet).